We begin with the raw amino-acid sequence, 490 residues long: Probable cytosol aminopeptidase (490 aa).

Mn(2+) contacts are provided by K258 and D263. K270 is an active-site residue. Mn(2+) is bound by residues D282, D341, and E343. R345 is a catalytic residue.

It belongs to the peptidase M17 family. The cofactor is Mn(2+).

The protein localises to the cytoplasm. It catalyses the reaction Release of an N-terminal amino acid, Xaa-|-Yaa-, in which Xaa is preferably Leu, but may be other amino acids including Pro although not Arg or Lys, and Yaa may be Pro. Amino acid amides and methyl esters are also readily hydrolyzed, but rates on arylamides are exceedingly low.. The enzyme catalyses Release of an N-terminal amino acid, preferentially leucine, but not glutamic or aspartic acids.. Functionally, presumably involved in the processing and regular turnover of intracellular proteins. Catalyzes the removal of unsubstituted N-terminal amino acids from various peptides. The polypeptide is Probable cytosol aminopeptidase (Microcystis aeruginosa (strain NIES-843 / IAM M-2473)).